The chain runs to 340 residues: Ketol-acid reductoisomerase (NADP(+)) (340 aa).

One can recognise a KARI N-terminal Rossmann domain in the interval 3–182 (VQMEYEKDVK…GAARVGLLET (180 aa)). Residues 26–29 (YGSQ), Arg-49, Ser-53, and 83–86 (DEIQ) each bind NADP(+). His-108 is a catalytic residue. An NADP(+)-binding site is contributed by Gly-134. The KARI C-terminal knotted domain maps to 183–328 (TYKEETEEDL…AELRKAMPFV (146 aa)). Positions 191, 195, 227, and 231 each coordinate Mg(2+). A substrate-binding site is contributed by Ser-252.

This sequence belongs to the ketol-acid reductoisomerase family. Mg(2+) serves as cofactor.

It carries out the reaction (2R)-2,3-dihydroxy-3-methylbutanoate + NADP(+) = (2S)-2-acetolactate + NADPH + H(+). It catalyses the reaction (2R,3R)-2,3-dihydroxy-3-methylpentanoate + NADP(+) = (S)-2-ethyl-2-hydroxy-3-oxobutanoate + NADPH + H(+). Its pathway is amino-acid biosynthesis; L-isoleucine biosynthesis; L-isoleucine from 2-oxobutanoate: step 2/4. It participates in amino-acid biosynthesis; L-valine biosynthesis; L-valine from pyruvate: step 2/4. Its function is as follows. Involved in the biosynthesis of branched-chain amino acids (BCAA). Catalyzes an alkyl-migration followed by a ketol-acid reduction of (S)-2-acetolactate (S2AL) to yield (R)-2,3-dihydroxy-isovalerate. In the isomerase reaction, S2AL is rearranged via a Mg-dependent methyl migration to produce 3-hydroxy-3-methyl-2-ketobutyrate (HMKB). In the reductase reaction, this 2-ketoacid undergoes a metal-dependent reduction by NADPH to yield (R)-2,3-dihydroxy-isovalerate. This Streptococcus gordonii (strain Challis / ATCC 35105 / BCRC 15272 / CH1 / DL1 / V288) protein is Ketol-acid reductoisomerase (NADP(+)).